The following is a 344-amino-acid chain: Anthranilate phosphoribosyltransferase (344 aa).

Residues G85, 88 to 89 (GD), T93, 95 to 98 (NIST), 113 to 121 (KHGGRSVSS), and S125 contribute to the 5-phospho-alpha-D-ribose 1-diphosphate site. G85 contributes to the anthranilate binding site. S97 provides a ligand contact to Mg(2+). R171 is an anthranilate binding site. Residues D230 and E231 each contribute to the Mg(2+) site.

The protein belongs to the anthranilate phosphoribosyltransferase family. Homodimer. Mg(2+) serves as cofactor.

It catalyses the reaction N-(5-phospho-beta-D-ribosyl)anthranilate + diphosphate = 5-phospho-alpha-D-ribose 1-diphosphate + anthranilate. The protein operates within amino-acid biosynthesis; L-tryptophan biosynthesis; L-tryptophan from chorismate: step 2/5. Catalyzes the transfer of the phosphoribosyl group of 5-phosphorylribose-1-pyrophosphate (PRPP) to anthranilate to yield N-(5'-phosphoribosyl)-anthranilate (PRA). The sequence is that of Anthranilate phosphoribosyltransferase from Delftia acidovorans (strain DSM 14801 / SPH-1).